The sequence spans 291 residues: Cell division protein FtsX (291 aa).

Residues Met1–Phe18 lie on the Cytoplasmic side of the membrane. A helical membrane pass occupies residues Ser19–Ile39. The Periplasmic segment spans residues Asn40–Lys162. A helical membrane pass occupies residues Val163–Asn183. Over Ser184–Lys220 the chain is Cytoplasmic. The chain crosses the membrane as a helical span at residues Leu221–Glu241. Topologically, residues Thr242–Lys253 are periplasmic. The helical transmembrane segment at Ala254–Ser274 threads the bilayer. The Cytoplasmic portion of the chain corresponds to Thr275–Tyr291.

It belongs to the ABC-4 integral membrane protein family. FtsX subfamily.

It is found in the cell inner membrane. Its function is as follows. Required for cell division and gliding motility. The polypeptide is Cell division protein FtsX (Flavobacterium johnsoniae (strain ATCC 17061 / DSM 2064 / JCM 8514 / BCRC 14874 / CCUG 350202 / NBRC 14942 / NCIMB 11054 / UW101) (Cytophaga johnsonae)).